The following is a 305-amino-acid chain: Polyamine aminopropyltransferase 2 (305 aa).

The region spanning 7 to 242 (WRFVAEWTSE…GLWGFVAASD (236 aa)) is the PABS domain. Position 36 (glutamine 36) interacts with S-methyl-5'-thioadenosine. Spermidine-binding residues include histidine 67 and glutamate 91. Residues aspartate 111 and 143–144 (DG) each bind S-methyl-5'-thioadenosine. The active-site Proton acceptor is the aspartate 161. Proline 170 provides a ligand contact to S-methyl-5'-thioadenosine.

The protein belongs to the spermidine/spermine synthase family. In terms of assembly, homodimer or homotetramer.

The protein localises to the cytoplasm. It carries out the reaction S-adenosyl 3-(methylsulfanyl)propylamine + propane-1,3-diamine = norspermidine + S-methyl-5'-thioadenosine + H(+). Functionally, involved in the biosynthesis of polyamines which are thought to support the growth of thermophilic microorganisms under high-temperature conditions. It seems that long-chain and branched-chain of polyamines effectively stabilize DNA and RNA, respectively. Catalyzes the irreversible transfer of a propylamine group from the amino donor S-adenosylmethioninamine (decarboxy-AdoMet) to 1,3-diaminopropane to yield sym-norspermidine (bis(3-aminopropyl)amine). It can also synthesize thermospermine from spermidine with a very low activity. This chain is Polyamine aminopropyltransferase 2, found in Hyperthermus butylicus (strain DSM 5456 / JCM 9403 / PLM1-5).